The sequence spans 261 residues: Cytochrome c oxidase subunit 3 (261 aa).

Residues 1 to 15 (MTHQTHAYHMVNPSP) are Mitochondrial matrix-facing. The helical transmembrane segment at 16–34 (WPLTGALSALLMTSGLIMW) threads the bilayer. The Mitochondrial intermembrane portion of the chain corresponds to 35-40 (FHFNST). The chain crosses the membrane as a helical span at residues 41 to 66 (ALLMLGLTTNMLTMYQWWRDIVREST). Residues 67–72 (FQGHHT) lie on the Mitochondrial matrix side of the membrane. The helical transmembrane segment at 73–105 (PTVQKGLRYGMILFIISEVLFFTGFFWAFYHSS) threads the bilayer. Residues 106–128 (LAPTPELGGCWPPTGIHPLNPLE) lie on the Mitochondrial intermembrane side of the membrane. A helical transmembrane segment spans residues 129-152 (VPLLNTSVLLASGVSITWAHHSLM). Residues 153-155 (EGN) are Mitochondrial matrix-facing. The helical transmembrane segment at 156-183 (RNHMLQALFITIALGVYFTLLQASEYYE) threads the bilayer. Residues 184-190 (APFTISD) are Mitochondrial intermembrane-facing. The chain crosses the membrane as a helical span at residues 191-223 (GVYGSTFFVATGFHGLHVIIGSTFLIVCFFRQL). Residues 224–232 (KFHFTSNHH) are Mitochondrial matrix-facing. The helical transmembrane segment at 233 to 256 (FGFEAAAWYWHFVDVVWLFLYVSI) threads the bilayer. The Mitochondrial intermembrane segment spans residues 257-261 (YWWGS).

The protein belongs to the cytochrome c oxidase subunit 3 family. Component of the cytochrome c oxidase (complex IV, CIV), a multisubunit enzyme composed of 14 subunits. The complex is composed of a catalytic core of 3 subunits MT-CO1, MT-CO2 and MT-CO3, encoded in the mitochondrial DNA, and 11 supernumerary subunits COX4I, COX5A, COX5B, COX6A, COX6B, COX6C, COX7A, COX7B, COX7C, COX8 and NDUFA4, which are encoded in the nuclear genome. The complex exists as a monomer or a dimer and forms supercomplexes (SCs) in the inner mitochondrial membrane with NADH-ubiquinone oxidoreductase (complex I, CI) and ubiquinol-cytochrome c oxidoreductase (cytochrome b-c1 complex, complex III, CIII), resulting in different assemblies (supercomplex SCI(1)III(2)IV(1) and megacomplex MCI(2)III(2)IV(2)).

It is found in the mitochondrion inner membrane. It carries out the reaction 4 Fe(II)-[cytochrome c] + O2 + 8 H(+)(in) = 4 Fe(III)-[cytochrome c] + 2 H2O + 4 H(+)(out). Component of the cytochrome c oxidase, the last enzyme in the mitochondrial electron transport chain which drives oxidative phosphorylation. The respiratory chain contains 3 multisubunit complexes succinate dehydrogenase (complex II, CII), ubiquinol-cytochrome c oxidoreductase (cytochrome b-c1 complex, complex III, CIII) and cytochrome c oxidase (complex IV, CIV), that cooperate to transfer electrons derived from NADH and succinate to molecular oxygen, creating an electrochemical gradient over the inner membrane that drives transmembrane transport and the ATP synthase. Cytochrome c oxidase is the component of the respiratory chain that catalyzes the reduction of oxygen to water. Electrons originating from reduced cytochrome c in the intermembrane space (IMS) are transferred via the dinuclear copper A center (CU(A)) of subunit 2 and heme A of subunit 1 to the active site in subunit 1, a binuclear center (BNC) formed by heme A3 and copper B (CU(B)). The BNC reduces molecular oxygen to 2 water molecules using 4 electrons from cytochrome c in the IMS and 4 protons from the mitochondrial matrix. The chain is Cytochrome c oxidase subunit 3 (MT-CO3) from Cephalophorus natalensis (Natal red duiker).